A 192-amino-acid chain; its full sequence is uncharacterized protein (192 aa).

It to M.thermoautotrophicum MTH863.

This is an uncharacterized protein from Methanocaldococcus jannaschii (strain ATCC 43067 / DSM 2661 / JAL-1 / JCM 10045 / NBRC 100440) (Methanococcus jannaschii).